The following is a 90-amino-acid chain: uncharacterized protein (90 aa).

The first 20 residues, 1–20 (MAYKMLQVVLCSTLLIGALG), serve as a signal peptide directing secretion.

This is an uncharacterized protein from Homo sapiens (Human).